The primary structure comprises 393 residues: CCCH-type zinc finger protein oma-2 (393 aa).

Residues 1–26 (MDMLKENVIQNNEARTESSVEPSHPD) form a disordered region. The span at 14-26 (ARTESSVEPSHPD) shows a compositional bias: basic and acidic residues. C3H1-type zinc fingers lie at residues 105 to 133 (SYKTVICQAWLESKTCAFAENCRFAHGEE) and 147 to 175 (KYRTKLCDKYTTTGLCPYGKRCLFIHPDN). Disordered regions lie at residues 227 to 251 (TPDEPAANMPLGPTPVSIRGPRYEL) and 311 to 340 (KQSTPGGVSGYSSSGSTPSQDSDSSPLTAA). Low complexity predominate over residues 313-340 (STPGGVSGYSSSGSTPSQDSDSSPLTAA). At threonine 327 the chain carries Phosphothreonine; by GSK3.

Exclusively expressed in the hermaphrodite gonad. Expression only in cellulized oocytes. Widely distributed throughout gonadal oocytes from the mitotic stage to the developing diakinesis stage.

The protein resides in the cytoplasm. It localises to the cytoplasmic granule. Its subcellular location is the cytoskeleton. It is found in the microtubule organizing center. The protein localises to the centrosome. Its function is as follows. Zinc-finger RNA-binding protein that binds to 5'-UA[AU]-3' motifs in the 3'-UTR of maternal mRNAs to suppress translation in oocytes and embryos. Acts redundantly with oma-1 to control the temporal expression and distribution of maternal proteins and thereby promote meiotic progression, oocyte maturation, fertilization and embryonic development. Also, together with oma-1, is involved in P-granule distribution during embryonic development. This chain is CCCH-type zinc finger protein oma-2, found in Caenorhabditis elegans.